Reading from the N-terminus, the 257-residue chain is Lysine-rich coiled-coil protein 1 (257 aa).

Residues 145–257 (NTSAHQASYK…MLWDQSILGF (113 aa)) form a disordered region. Residues 152–162 (SYKHIHQKRKR) show a composition bias toward basic residues. Composition is skewed to basic and acidic residues over residues 163–176 (HTEEGREKPEEERP), 183–193 (ACEEIDLDKYK), 200–212 (TEAETVRVSTEKL), and 219–228 (RSRDVASKKE). Residues 210-248 (EKLKNRKEKRSRDVASKKEERKRRKEKKEQGQERTEEEM) are a coiled coil.

The polypeptide is Lysine-rich coiled-coil protein 1 (KRCC1) (Bos taurus (Bovine)).